The sequence spans 131 residues: Profilin-3 (131 aa).

This sequence belongs to the profilin family. Occurs in many kinds of cells as a complex with monomeric actin in a 1:1 ratio.

Its subcellular location is the cytoplasm. The protein localises to the cytoskeleton. In terms of biological role, binds to actin and affects the structure of the cytoskeleton. At high concentrations, profilin prevents the polymerization of actin, whereas it enhances it at low concentrations. By binding to PIP2, it inhibits the formation of IP3 and DG. This Hevea brasiliensis (Para rubber tree) protein is Profilin-3.